The chain runs to 214 residues: 3-isopropylmalate dehydratase small subunit (214 aa).

It belongs to the LeuD family. LeuD type 1 subfamily. In terms of assembly, heterodimer of LeuC and LeuD.

It carries out the reaction (2R,3S)-3-isopropylmalate = (2S)-2-isopropylmalate. Its pathway is amino-acid biosynthesis; L-leucine biosynthesis; L-leucine from 3-methyl-2-oxobutanoate: step 2/4. Functionally, catalyzes the isomerization between 2-isopropylmalate and 3-isopropylmalate, via the formation of 2-isopropylmaleate. This Pseudomonas putida (strain W619) protein is 3-isopropylmalate dehydratase small subunit.